We begin with the raw amino-acid sequence, 312 residues long: Protoheme IX farnesyltransferase (312 aa).

A run of 8 helical transmembrane segments spans residues 34 to 54 (LVIF…HPVL), 56 to 76 (ITSL…NMAL), 119 to 139 (ILVN…YVVI), 152 to 172 (IVIG…AATG), 179 to 199 (LLLF…LALF), 225 to 245 (ILLY…LGYF), 248 to 268 (VYGV…IEVF), and 283 to 303 (LFAF…LEAV).

It belongs to the UbiA prenyltransferase family. Protoheme IX farnesyltransferase subfamily.

It localises to the cell inner membrane. It carries out the reaction heme b + (2E,6E)-farnesyl diphosphate + H2O = Fe(II)-heme o + diphosphate. It participates in porphyrin-containing compound metabolism; heme O biosynthesis; heme O from protoheme: step 1/1. Its function is as follows. Converts heme B (protoheme IX) to heme O by substitution of the vinyl group on carbon 2 of heme B porphyrin ring with a hydroxyethyl farnesyl side group. This is Protoheme IX farnesyltransferase from Bradyrhizobium sp. (strain BTAi1 / ATCC BAA-1182).